The chain runs to 953 residues: Translation initiation factor IF-2 (953 aa).

2 disordered regions span residues 48–240 and 279–363; these read SSFS…AQQE and TKLK…TERK. Basic and acidic residues-rich tracts occupy residues 80-89, 98-111, and 140-188; these read TGSEHVEKTQ, FKAE…EQAA, and QGDK…ENHK. Polar residues predominate over residues 191 to 207; that stretch reads RFTNQKKQGRQEPQSKS. Residues 229–240 are compositionally biased toward basic and acidic residues; sequence RQSETRFRAQQE. Positions 282–291 are enriched in polar residues; the sequence is KSSNISAKST. Positions 300-317 are enriched in basic and acidic residues; the sequence is ARPEKNRELTHHSQEGQK. Over residues 322 to 338 the composition is skewed to low complexity; it reads SWNSQNQVRNQKNSNWN. Basic residues predominate over residues 339-348; it reads KNKKTKKGKN. The tr-type G domain maps to 454–623; that stretch reads ERAPVVTIMG…LLVAEVEELK (170 aa). The interval 463–470 is G1; sequence GHVDHGKT. 463–470 is a GTP binding site; sequence GHVDHGKT. The tract at residues 488–492 is G2; that stretch reads GITQH. The segment at 509 to 512 is G3; that stretch reads DTPG. GTP is bound by residues 509-513 and 563-566; these read DTPGH and NKID. The interval 563–566 is G4; the sequence is NKID. A G5 region spans residues 599–601; the sequence is SAK.

This sequence belongs to the TRAFAC class translation factor GTPase superfamily. Classic translation factor GTPase family. IF-2 subfamily.

The protein localises to the cytoplasm. In terms of biological role, one of the essential components for the initiation of protein synthesis. Protects formylmethionyl-tRNA from spontaneous hydrolysis and promotes its binding to the 30S ribosomal subunits. Also involved in the hydrolysis of GTP during the formation of the 70S ribosomal complex. The polypeptide is Translation initiation factor IF-2 (Streptococcus pyogenes serotype M1).